Consider the following 303-residue polypeptide: 5'-3' exonuclease (303 aa).

The 5'-3' exonuclease domain maps to 179-262; that stretch reads ISPAQWVDVK…LATITTEIEA (84 aa).

In terms of biological role, 5'-3' exonuclease acting preferentially on double-stranded DNA. The chain is 5'-3' exonuclease from Halalkalibacterium halodurans (strain ATCC BAA-125 / DSM 18197 / FERM 7344 / JCM 9153 / C-125) (Bacillus halodurans).